The chain runs to 236 residues: Probable fimbrial chaperone EcpE (236 aa).

Positions 1-27 (MFRRRGVTLTKALLTVVCMLAAPLTQA) are cleaved as a signal peptide.

The protein belongs to the EcpB/EcpE family.

Functionally, part of the ecpRABCDE operon, which encodes the E.coli common pilus (ECP). ECP is found in both commensal and pathogenic strains and plays a dual role in early-stage biofilm development and host cell recognition. In Escherichia coli O18:K1:H7 (strain IHE3034 / ExPEC), this protein is Probable fimbrial chaperone EcpE (ecpE).